Here is a 208-residue protein sequence, read N- to C-terminus: Protein GrpE (208 aa).

Residues 1 to 62 (MTEKDESVKS…ETAVDPKDEE (62 aa)) form a disordered region. Residues 46–55 (SNEESSEETA) are compositionally biased toward acidic residues.

Belongs to the GrpE family. In terms of assembly, homodimer.

It is found in the cytoplasm. Its function is as follows. Participates actively in the response to hyperosmotic and heat shock by preventing the aggregation of stress-denatured proteins, in association with DnaK and GrpE. It is the nucleotide exchange factor for DnaK and may function as a thermosensor. Unfolded proteins bind initially to DnaJ; upon interaction with the DnaJ-bound protein, DnaK hydrolyzes its bound ATP, resulting in the formation of a stable complex. GrpE releases ADP from DnaK; ATP binding to DnaK triggers the release of the substrate protein, thus completing the reaction cycle. Several rounds of ATP-dependent interactions between DnaJ, DnaK and GrpE are required for fully efficient folding. This Staphylococcus haemolyticus (strain JCSC1435) protein is Protein GrpE.